The primary structure comprises 68 residues: Beta-defensin 1 (68 aa).

The signal sequence occupies residues 1 to 21 (MRTSYLLLFTLCLLMSEMASG). The propeptide occupies 22–32 (DNFLTGLGHRS). 3 cysteine pairs are disulfide-bonded: Cys-37–Cys-66, Cys-44–Cys-59, and Cys-49–Cys-67.

Belongs to the beta-defensin family. Monomer. Homodimer.

It localises to the secreted. The protein localises to the membrane. In terms of biological role, has bactericidal activity. May act as a ligand for C-C chemokine receptor CCR6. Positively regulates the sperm motility and bactericidal activity in a CCR6-dependent manner. Binds to CCR6 and triggers Ca2+ mobilization in the sperm which is important for its motility. The protein is Beta-defensin 1 (DEFB1) of Presbytis melalophos (Mitred leaf monkey).